Reading from the N-terminus, the 430-residue chain is Glutamate-1-semialdehyde 2,1-aminomutase (430 aa).

Lys265 is modified (N6-(pyridoxal phosphate)lysine).

The protein belongs to the class-III pyridoxal-phosphate-dependent aminotransferase family. HemL subfamily. Homodimer. It depends on pyridoxal 5'-phosphate as a cofactor.

It is found in the cytoplasm. It carries out the reaction (S)-4-amino-5-oxopentanoate = 5-aminolevulinate. It functions in the pathway porphyrin-containing compound metabolism; protoporphyrin-IX biosynthesis; 5-aminolevulinate from L-glutamyl-tRNA(Glu): step 2/2. The sequence is that of Glutamate-1-semialdehyde 2,1-aminomutase from Shewanella putrefaciens (strain CN-32 / ATCC BAA-453).